The following is a 185-amino-acid chain: Ribosome-recycling factor (185 aa).

Belongs to the RRF family.

The protein localises to the cytoplasm. Its function is as follows. Responsible for the release of ribosomes from messenger RNA at the termination of protein biosynthesis. May increase the efficiency of translation by recycling ribosomes from one round of translation to another. The chain is Ribosome-recycling factor from Shewanella woodyi (strain ATCC 51908 / MS32).